A 257-amino-acid polypeptide reads, in one-letter code: 1-(5-phosphoribosyl)-5-[(5-phosphoribosylamino)methylideneamino] imidazole-4-carboxamide isomerase (257 aa).

Asp-8 (proton acceptor) is an active-site residue. Asp-129 functions as the Proton donor in the catalytic mechanism.

This sequence belongs to the HisA/HisF family.

Its subcellular location is the cytoplasm. The catalysed reaction is 1-(5-phospho-beta-D-ribosyl)-5-[(5-phospho-beta-D-ribosylamino)methylideneamino]imidazole-4-carboxamide = 5-[(5-phospho-1-deoxy-D-ribulos-1-ylimino)methylamino]-1-(5-phospho-beta-D-ribosyl)imidazole-4-carboxamide. Its pathway is amino-acid biosynthesis; L-histidine biosynthesis; L-histidine from 5-phospho-alpha-D-ribose 1-diphosphate: step 4/9. This chain is 1-(5-phosphoribosyl)-5-[(5-phosphoribosylamino)methylideneamino] imidazole-4-carboxamide isomerase, found in Nostoc punctiforme (strain ATCC 29133 / PCC 73102).